Reading from the N-terminus, the 650-residue chain is 1-deoxy-D-xylulose-5-phosphate synthase (650 aa).

Residues histidine 73 and 114 to 116 (SHA) each bind thiamine diphosphate. Residue aspartate 145 coordinates Mg(2+). Thiamine diphosphate-binding positions include 146-147 (GA), asparagine 174, tyrosine 285, and glutamate 367. Position 174 (asparagine 174) interacts with Mg(2+). The interval 631–650 (MGDEVGADESNQTPAGGGQA) is disordered.

Belongs to the transketolase family. DXPS subfamily. As to quaternary structure, homodimer. Mg(2+) is required as a cofactor. Requires thiamine diphosphate as cofactor.

It catalyses the reaction D-glyceraldehyde 3-phosphate + pyruvate + H(+) = 1-deoxy-D-xylulose 5-phosphate + CO2. The protein operates within metabolic intermediate biosynthesis; 1-deoxy-D-xylulose 5-phosphate biosynthesis; 1-deoxy-D-xylulose 5-phosphate from D-glyceraldehyde 3-phosphate and pyruvate: step 1/1. Catalyzes the acyloin condensation reaction between C atoms 2 and 3 of pyruvate and glyceraldehyde 3-phosphate to yield 1-deoxy-D-xylulose-5-phosphate (DXP). The polypeptide is 1-deoxy-D-xylulose-5-phosphate synthase (Parafrankia sp. (strain EAN1pec)).